A 502-amino-acid polypeptide reads, in one-letter code: Tubulin gamma chain (502 aa).

The segment covering glutamate 51–proline 68 has biased composition (polar residues). Residues glutamate 51 to arginine 73 are disordered. Alanine 169–glycine 175 contributes to the GTP binding site. Over residues aspartate 473 to aspartate 482 the composition is skewed to acidic residues. Residues aspartate 473–isoleucine 502 are disordered.

It belongs to the tubulin family.

The protein localises to the cytoplasm. It is found in the cytoskeleton. It localises to the microtubule organizing center. Its subcellular location is the spindle pole body. In terms of biological role, tubulin is the major constituent of microtubules. The gamma chain is found at microtubule organizing centers (MTOC) such as the spindle poles or the centrosome, suggesting that it is involved in the minus-end nucleation of microtubule assembly. The polypeptide is Tubulin gamma chain (TUB4) (Candida albicans (Yeast)).